Consider the following 500-residue polypeptide: Lysine--tRNA ligase (500 aa).

The Mg(2+) site is built by Glu406 and Glu413.

Belongs to the class-II aminoacyl-tRNA synthetase family. Homodimer. Requires Mg(2+) as cofactor.

It localises to the cytoplasm. It catalyses the reaction tRNA(Lys) + L-lysine + ATP = L-lysyl-tRNA(Lys) + AMP + diphosphate. This is Lysine--tRNA ligase from Sulfolobus acidocaldarius (strain ATCC 33909 / DSM 639 / JCM 8929 / NBRC 15157 / NCIMB 11770).